We begin with the raw amino-acid sequence, 124 residues long: MSQQPYYETMYILRPDIPEEEVETHVTKYREMVTEAGAEVLDNQMRGKRRLAYPISNHKEGIYVQLSHNGNGQQVAVLEKAMRLSEDVIRYLTVKQEGPLPAPRIVPGSEPEPVQQQEAAAVEA.

The segment at 99–124 is disordered; the sequence is PLPAPRIVPGSEPEPVQQQEAAAVEA. A compositionally biased stretch (low complexity) spans 111 to 124; the sequence is PEPVQQQEAAAVEA.

The protein belongs to the bacterial ribosomal protein bS6 family.

Its function is as follows. Binds together with bS18 to 16S ribosomal RNA. This is Small ribosomal subunit protein bS6 from Prochlorococcus marinus (strain MIT 9313).